The primary structure comprises 312 residues: Glyoxylate/hydroxypyruvate reductase A (312 aa).

The active site involves Arg-227. His-275 functions as the Proton donor in the catalytic mechanism.

It belongs to the D-isomer specific 2-hydroxyacid dehydrogenase family. GhrA subfamily.

It is found in the cytoplasm. It catalyses the reaction glycolate + NADP(+) = glyoxylate + NADPH + H(+). The catalysed reaction is (R)-glycerate + NAD(+) = 3-hydroxypyruvate + NADH + H(+). It carries out the reaction (R)-glycerate + NADP(+) = 3-hydroxypyruvate + NADPH + H(+). Functionally, catalyzes the NADPH-dependent reduction of glyoxylate and hydroxypyruvate into glycolate and glycerate, respectively. This chain is Glyoxylate/hydroxypyruvate reductase A, found in Shigella boydii serotype 18 (strain CDC 3083-94 / BS512).